The chain runs to 162 residues: Large ribosomal subunit protein uL30 (162 aa).

Belongs to the universal ribosomal protein uL30 family. As to quaternary structure, part of the 50S ribosomal subunit.

This chain is Large ribosomal subunit protein uL30, found in Desulfurococcus amylolyticus (strain DSM 18924 / JCM 16383 / VKM B-2413 / 1221n) (Desulfurococcus kamchatkensis).